We begin with the raw amino-acid sequence, 670 residues long: Extracellular matrix protein 2 (670 aa).

The N-terminal stretch at 1–19 (MKLAVLFCFILLIVLQTDC) is a signal peptide. Residues 96 to 153 (GYCFVKGMIMYNKAVWSPEPCTTCLCSNGRVLCDETECHPKACPYTIKPEGECCPICS) enclose the VWFC domain. A disordered region spans residues 185–270 (SEEDEEIAEG…EEDAIRGDVF (86 aa)). Residues 192 to 227 (AEGHKEHKKETSVPTKIHGDGERTERKLRPEKEGRS) are compositionally biased toward basic and acidic residues. Over residues 241-263 (ESKEETEREGEEEEEEEEEEEED) the composition is skewed to acidic residues. The Cell attachment site signature appears at 266–268 (RGD). Positions 278–315 (PGTPRGRPRLPRSCSLSYRTISCVHADFTEIPPITAPE) constitute an LRRNT domain. LRR repeat units follow at residues 339 to 359 (NLERLDLSRNNITSSGIGPKA), 365 to 386 (KLMRLNMDGNNLVHIPSDLPST), 387 to 407 (LEELKINDNNLQAIDEKSLSD), 410 to 430 (QLVTLELEGNNLSEINVDPLA), 436 to 456 (SLSYLRLGRNKFRIIPQGLPA), 457 to 478 (STEELYLENNQIEEITEICFNH), 481 to 501 (KITMIILRYNKIEESRIAPLA), 507 to 528 (NLESIDLSYNKLYHVPSYLPKS), 529 to 549 (LLHLVLIGNQIDRIPGYVFGH), 553 to 573 (GLEYLYLSFNRLSDDGVDLVS), 580 to 601 (SLRELFLDHNDFKSIPPGIQDM), 603 to 624 (ALHFLRLNNNKIRNIHPEQICN), and 632 to 655 (ALEHLHLENNYIRTREISSYAFSC). N349 carries N-linked (GlcNAc...) asparagine glycosylation. N420 carries an N-linked (GlcNAc...) asparagine glycan. N477 carries an N-linked (GlcNAc...) asparagine glycan.

The protein belongs to the small leucine-rich proteoglycan (SLRP) family. SLRP class I subfamily. As to quaternary structure, interacts with numerous extracellular matrix proteins. Interacts with isoform 1 of MSL1. Interacts with isoform 3 of RASSF1.

Its subcellular location is the secreted. The protein localises to the extracellular space. It localises to the extracellular matrix. Functionally, promotes matrix assembly and cell adhesiveness. This Mus musculus (Mouse) protein is Extracellular matrix protein 2 (Ecm2).